The sequence spans 87 residues: RNA-binding protein Hfq (87 aa).

The region spanning 9–68 is the Sm domain; sequence DPFLNALRRERIPVSIYLVNGIKLQGQIESFDQFVILLKNTVSQMVYKHAISTVVPARAV.

This sequence belongs to the Hfq family. As to quaternary structure, homohexamer.

Its function is as follows. RNA chaperone that binds small regulatory RNA (sRNAs) and mRNAs to facilitate mRNA translational regulation in response to envelope stress, environmental stress and changes in metabolite concentrations. Also binds with high specificity to tRNAs. This chain is RNA-binding protein Hfq, found in Aeromonas hydrophila subsp. hydrophila (strain ATCC 7966 / DSM 30187 / BCRC 13018 / CCUG 14551 / JCM 1027 / KCTC 2358 / NCIMB 9240 / NCTC 8049).